Reading from the N-terminus, the 135-residue chain is Probable histone H2A.7 (135 aa).

The protein belongs to the histone H2A family. As to quaternary structure, the nucleosome is a histone octamer containing two molecules each of H2A, H2B, H3 and H4 assembled in one H3-H4 heterotetramer and two H2A-H2B heterodimers. The octamer wraps approximately 147 bp of DNA.

It localises to the nucleus. The protein resides in the chromosome. Functionally, core component of nucleosome. Nucleosomes wrap and compact DNA into chromatin, limiting DNA accessibility to the cellular machineries which require DNA as a template. Histones thereby play a central role in transcription regulation, DNA repair, DNA replication and chromosomal stability. DNA accessibility is regulated via a complex set of post-translational modifications of histones, also called histone code, and nucleosome remodeling. The polypeptide is Probable histone H2A.7 (Oryza sativa subsp. indica (Rice)).